A 37-amino-acid polypeptide reads, in one-letter code: Cytochrome b6-f complex subunit 5 (37 aa).

The helical transmembrane segment at 5-25 threads the bilayer; the sequence is ILLGIVLGMVLVTLAGLFVAA.

The protein belongs to the PetG family. The 4 large subunits of the cytochrome b6-f complex are cytochrome b6, subunit IV (17 kDa polypeptide, PetD), cytochrome f and the Rieske protein, while the 4 small subunits are PetG, PetL, PetM and PetN. The complex functions as a dimer.

The protein resides in the cellular thylakoid membrane. Component of the cytochrome b6-f complex, which mediates electron transfer between photosystem II (PSII) and photosystem I (PSI), cyclic electron flow around PSI, and state transitions. PetG is required for either the stability or assembly of the cytochrome b6-f complex. This Synechococcus sp. (strain JA-3-3Ab) (Cyanobacteria bacterium Yellowstone A-Prime) protein is Cytochrome b6-f complex subunit 5.